The following is a 399-amino-acid chain: Putative gustatory receptor 59e (399 aa).

Residues 1 to 33 (MDSSYWENLLLTINRFLGVYPSGRVGVLRWLHT) lie on the Cytoplasmic side of the membrane. The chain crosses the membrane as a helical span at residues 34–54 (LWSLFLLMYIWTGSIVKCLEF). The Extracellular segment spans residues 55–65 (TVEIPTIEKLL). The chain crosses the membrane as a helical span at residues 66–86 (YLMEFPGNMATIAILVYYAVL). Residues 87–120 (NRPLAHGAELQIERIITGLKGKAKRLVYKRHGQR) are Cytoplasmic-facing. A helical transmembrane segment spans residues 121 to 141 (TLHLMATTLVFHGLCVLVDVV). The Extracellular segment spans residues 142-206 (NYDFEFWTTW…RPPQGSTKLD (65 aa)). A helical membrane pass occupies residues 207–227 (ACYESAFAVLVDAGGGSALMI). Over 228-250 (EEMRYTCNLIEQVHSQFLLRFGL) the chain is Cytoplasmic. The helical transmembrane segment at 251–271 (YLVLNLLNSLVSICVELYLIF) threads the bilayer. The Extracellular segment spans residues 272 to 282 (NFFETPLWEES). The chain crosses the membrane as a helical span at residues 283 to 303 (VLLVYRLLWLAMHGGRIWFIL). Residues 304–361 (SVNEQILEQKCNLCQLLNELEVCSSRLQRTINRFLLQLQRSIDQPLEACGIVTLDTRS) lie on the Cytoplasmic side of the membrane. A helical membrane pass occupies residues 362–382 (LGGFIGVLMAIVIFLIQIGLG). Asn-383 and Asn-392 each carry an N-linked (GlcNAc...) asparagine glycan. The Extracellular portion of the chain corresponds to 383–399 (NKSLMGVALNRSNWVYV).

It belongs to the insect chemoreceptor superfamily. Gustatory receptor (GR) family. Gr10a subfamily. In terms of tissue distribution, expressed in the adult labellar chemosensory neurons. In larvae, is expressed in neurons of the terminal external chemosensory organ.

The protein localises to the cell membrane. Probable gustatory receptor which mediates acceptance or avoidance behavior, depending on its substrates. In Drosophila melanogaster (Fruit fly), this protein is Putative gustatory receptor 59e (Gr59e).